Consider the following 146-residue polypeptide: Large ribosomal subunit protein uL15 (146 aa).

Residues 1–13 (MKLHELKAAEGSR) show a composition bias toward basic and acidic residues. Positions 1-61 (MKLHELKAAE…GGQTPLFRRM (61 aa)) are disordered. Gly residues-rich tracts occupy residues 23 to 35 (TSSG…GRGQ) and 42 to 52 (SGGGVRLGFEG).

The protein belongs to the universal ribosomal protein uL15 family. As to quaternary structure, part of the 50S ribosomal subunit.

Binds to the 23S rRNA. This Streptococcus uberis (strain ATCC BAA-854 / 0140J) protein is Large ribosomal subunit protein uL15.